The primary structure comprises 400 residues: tRNA(Ile)-lysidine synthase (400 aa).

20–25 (SGGLDS) contacts ATP.

This sequence belongs to the tRNA(Ile)-lysidine synthase family.

The protein localises to the cytoplasm. The catalysed reaction is cytidine(34) in tRNA(Ile2) + L-lysine + ATP = lysidine(34) in tRNA(Ile2) + AMP + diphosphate + H(+). Functionally, ligates lysine onto the cytidine present at position 34 of the AUA codon-specific tRNA(Ile) that contains the anticodon CAU, in an ATP-dependent manner. Cytidine is converted to lysidine, thus changing the amino acid specificity of the tRNA from methionine to isoleucine. The protein is tRNA(Ile)-lysidine synthase of Wigglesworthia glossinidia brevipalpis.